Consider the following 209-residue polypeptide: Small ribosomal subunit protein uS5 (209 aa).

The region spanning 48 to 111 is the S5 DRBM domain; it reads LEDEVLDINM…DAAKLNITYI (64 aa).

It belongs to the universal ribosomal protein uS5 family. Part of the 30S ribosomal subunit. Contacts protein S4.

Functionally, with S4 and S12 plays an important role in translational accuracy. In Methanosarcina acetivorans (strain ATCC 35395 / DSM 2834 / JCM 12185 / C2A), this protein is Small ribosomal subunit protein uS5.